Reading from the N-terminus, the 161-residue chain is NADH-quinone oxidoreductase subunit C (161 aa).

Belongs to the complex I 30 kDa subunit family. In terms of assembly, NDH-1 is composed of 14 different subunits. Subunits NuoB, C, D, E, F, and G constitute the peripheral sector of the complex.

It localises to the cell inner membrane. It catalyses the reaction a quinone + NADH + 5 H(+)(in) = a quinol + NAD(+) + 4 H(+)(out). Its function is as follows. NDH-1 shuttles electrons from NADH, via FMN and iron-sulfur (Fe-S) centers, to quinones in the respiratory chain. The immediate electron acceptor for the enzyme in this species is believed to be ubiquinone. Couples the redox reaction to proton translocation (for every two electrons transferred, four hydrogen ions are translocated across the cytoplasmic membrane), and thus conserves the redox energy in a proton gradient. The sequence is that of NADH-quinone oxidoreductase subunit C from Citrifermentans bemidjiense (strain ATCC BAA-1014 / DSM 16622 / JCM 12645 / Bem) (Geobacter bemidjiensis).